Reading from the N-terminus, the 490-residue chain is Phosphoethanolamine N-methyltransferase 3 (490 aa).

S-adenosyl-L-homocysteine contacts are provided by G60, R65, D81, D106, V107, and N125. S158, S163, G164, R168, and Y175 together coordinate phosphocholine. N-methylethanolamine phosphate is bound by residues 244–245 (QY) and Y253. Y253 is a binding site for phosphocholine. S-adenosyl-L-homocysteine is bound by residues V262, S263, G289, D311, D337, C338, and R354. Phosphocholine-binding residues include Y385, Y399, R403, Y405, and K471. Residues Y385, Y399, 403-405 (RGY), and K471 each bind N-methylethanolamine phosphate.

It belongs to the class I-like SAM-binding methyltransferase superfamily. PEAMT family. As to expression, expressed in root vasculature, shoots, rosettes leaves, cauline leaves, sepals, petals, anther filaments and ovules. Highly expressed in leaf vasculature.

The protein localises to the cytoplasm. The enzyme catalyses phosphoethanolamine + S-adenosyl-L-methionine = N-methylethanolamine phosphate + S-adenosyl-L-homocysteine + H(+). The catalysed reaction is N-methylethanolamine phosphate + S-adenosyl-L-methionine = N,N-dimethylethanolamine phosphate + S-adenosyl-L-homocysteine + H(+). It catalyses the reaction N,N-dimethylethanolamine phosphate + S-adenosyl-L-methionine = phosphocholine + S-adenosyl-L-homocysteine + H(+). It participates in phospholipid metabolism; phosphatidylcholine biosynthesis; phosphocholine from phosphoethanolamine: step 1/1. Its function is as follows. Involved in phosphocholine biosynthesis. Catalyzes the N-methylation of phosphoethanolamine, phosphomonomethylethanolamine and phosphodimethylethanolamine, the three methylation steps required to convert phosphoethanolamine to phosphocholine (PC). In association with NMT1, regulates PC homeostasis, phase transition at the shoot apex, coordinated organ development, and fertility. In associtation with NMT1, involved in phosphatidylcholine biosynthesis and vascular development. The chain is Phosphoethanolamine N-methyltransferase 3 from Arabidopsis thaliana (Mouse-ear cress).